Reading from the N-terminus, the 139-residue chain is D-ribose pyranase (139 aa).

Residue His20 is the Proton donor of the active site. Substrate is bound by residues Asp28, His106, and 128–130 (YAN).

The protein belongs to the RbsD / FucU family. RbsD subfamily. Homodecamer.

Its subcellular location is the cytoplasm. It catalyses the reaction beta-D-ribopyranose = beta-D-ribofuranose. It functions in the pathway carbohydrate metabolism; D-ribose degradation; D-ribose 5-phosphate from beta-D-ribopyranose: step 1/2. Its function is as follows. Catalyzes the interconversion of beta-pyran and beta-furan forms of D-ribose. In Salmonella choleraesuis (strain SC-B67), this protein is D-ribose pyranase.